A 109-amino-acid polypeptide reads, in one-letter code: Large ribosomal subunit protein uL22 (109 aa).

It belongs to the universal ribosomal protein uL22 family. As to quaternary structure, part of the 50S ribosomal subunit.

In terms of biological role, this protein binds specifically to 23S rRNA; its binding is stimulated by other ribosomal proteins, e.g. L4, L17, and L20. It is important during the early stages of 50S assembly. It makes multiple contacts with different domains of the 23S rRNA in the assembled 50S subunit and ribosome. Functionally, the globular domain of the protein is located near the polypeptide exit tunnel on the outside of the subunit, while an extended beta-hairpin is found that lines the wall of the exit tunnel in the center of the 70S ribosome. The sequence is that of Large ribosomal subunit protein uL22 from Methylobacillus flagellatus (strain ATCC 51484 / DSM 6875 / VKM B-1610 / KT).